A 144-amino-acid chain; its full sequence is DHIDLEFDVGQCIQASYTAPTTGRTSVNIVASDGTVVLHVDYRKHWGGNPSTGKPWQNILIINSKLGGSWGTEEKVHDVETTIVNYDYTQCGQDADFSLELNQKDIATYAYRSPVNTVSRVQFDDQGYDAVLRKLCVVYPAPSK.

In terms of domain architecture, Galectin spans 1–138 (DHIDLEFDVG…DAVLRKLCVV (138 aa)).

Lectin that binds beta-galactoside and a wide array of complex carbohydrates. The chain is Galectin b from Aplysina lactuca (Marine sponge).